The chain runs to 312 residues: MKVAVLGAAGGIGQALALLLKNQLPSGSELSLYDIAPVTPGVAVDLSHIPTAVKIKGFSGEDATPALEGADVVLISAGVARRPGMDRSDLFNVNAGIVKNLVQQIAKTCPKACVGIITNPVNTTVAIAAEVLKKAGVYDKNKLFGVTTLDIIRSNTFVAELKGKLPTEVEVPVIGGHSGVTILPLLSQIPGVSFTEQEAAELTKRIQNAGTEVVEAKAGGGSATLSMGQAAARFGLSLVRALQGEKGVVECAYVEGDGQYARFFSQPLLLGKNGVEERKSIGTLSAFEQHSLDAMLDTLKKDIQLGEDFINK.

Residues 7 to 13 (GAAGGIG) and D34 each bind NAD(+). Residues R81 and R87 each coordinate substrate. Residues N94 and 117 to 119 (ITN) each bind NAD(+). 2 residues coordinate substrate: N119 and R153. The active-site Proton acceptor is the H177. Residue M227 coordinates NAD(+).

It belongs to the LDH/MDH superfamily. MDH type 1 family. As to quaternary structure, homodimer.

The enzyme catalyses (S)-malate + NAD(+) = oxaloacetate + NADH + H(+). Catalyzes the reversible oxidation of malate to oxaloacetate. This Salmonella dublin (strain CT_02021853) protein is Malate dehydrogenase.